Here is a 766-residue protein sequence, read N- to C-terminus: ABC-type oligopeptide transporter ABCB9 (766 aa).

8 helical membrane-spanning segments follow: residues 7–27, 47–67, 84–104, 116–136, 185–205, 225–245, 319–339, and 416–436; these read VVVT…IYVF, VLDL…ATIG, LVIT…LLLF, FWAL…LWWL, VAFL…ETFL, FSTA…AAGI, VFMF…FPII, and SGLT…HLVI. Residues 188 to 471 enclose the ABC transmembrane type-1 domain; sequence LVAASFFLIV…VGSVYSGLMQ (284 aa). One can recognise an ABC transporter domain in the interval 504–740; the sequence is VDFENVTFTY…GGLYAKLVQR (237 aa). ATP is bound at residue 539-546; it reads GPSGSGKS.

The protein belongs to the ABC transporter superfamily. ABCB family. MHC peptide exporter (TC 3.A.1.209) subfamily. As to quaternary structure, homodimer. Interacts (via TMD0 region) with LAMP1; this interaction strongly stabilizes ABCB9 and protects ABCB9 against lysosomal degradation. Interacts (via TMD0 region) with LAMP2 (isoform LAMP-2B). Interacts (via TMD0) with YIF1B; this interaction allows (but is not essential) the ER-to-Golgi trafficking and strongly depends on a salt bridge within TMD0. Highly expressed in testis, and at moderate levels in brain, spinal cord, and thyroid. Not expressed in monocytes but strongly expressed during differentiation of monocytes to dendritic cells and macrophages.

The protein resides in the lysosome membrane. It carries out the reaction a [oligopeptide](in) + ATP + H2O = a [oligopeptide](out) + ADP + phosphate + H(+). With respect to regulation, transport activity is limited by threshold levels of luminal peptide. ATP hydrolysis is reduced in the presence of the spatial challenging 18-mer peptide by 50% and the branched 16-mer peptide by 75%. Transport rate of the longer peptides is strongly reduced. In terms of biological role, ATP-dependent low-affinity peptide transporter which translocates a broad spectrum of peptides from the cytosol to the lysosomal lumen for degradation. Displays a broad peptide length specificity from 6-mer up to at least 59-mer peptides with an optimum of 23-mers. Binds and transports smaller and larger peptides with the same affinity. Favors positively charged, aromatic or hydrophobic residues in the N- and C-terminal positions whereas negatively charged residues as well as asparagine and methionine are not favored. This is ABC-type oligopeptide transporter ABCB9 from Homo sapiens (Human).